The chain runs to 142 residues: HTH-type transcriptional repressor NsrR (142 aa).

The HTH rrf2-type domain maps to 2-129 (QLTSFTDYGL…DRHTLAELVE (128 aa)). A DNA-binding region (H-T-H motif) is located at residues 28–51 (ITEVTQVYGVSRNHMVKIINQLSH). Residues Cys-91, Cys-96, and Cys-102 each coordinate [2Fe-2S] cluster.

[2Fe-2S] cluster is required as a cofactor.

Functionally, nitric oxide-sensitive repressor of genes involved in protecting the cell against nitrosative stress. May require iron for activity. This Proteus mirabilis (strain HI4320) protein is HTH-type transcriptional repressor NsrR.